The chain runs to 199 residues: Chaperone protein TorD (199 aa).

This sequence belongs to the TorD/DmsD family. TorD subfamily.

It localises to the cytoplasm. Its function is as follows. Involved in the biogenesis of TorA. Acts on TorA before the insertion of the molybdenum cofactor and, as a result, probably favors a conformation of the apoenzyme that is competent for acquiring the cofactor. This is Chaperone protein TorD from Escherichia coli (strain K12 / MC4100 / BW2952).